The following is a 117-amino-acid chain: NADH dehydrogenase [ubiquinone] 1 beta subcomplex subunit 9 (117 aa).

An N-acetylserine modification is found at Ser-2.

The protein belongs to the complex I LYR family. As to quaternary structure, complex I is composed of at least 49 different subunits. As to expression, expressed in roots, stems, flowers, rosette leaves, cauline leaves and siliques, with the highest expression in the stems.

Its subcellular location is the mitochondrion inner membrane. Accessory subunit of the mitochondrial membrane respiratory chain NADH dehydrogenase (Complex I), that is believed to be not involved in catalysis. Complex I functions in the transfer of electrons from NADH to the respiratory chain. The immediate electron acceptor for the enzyme is believed to be ubiquinone. Is required for correct plant growth and development. This chain is NADH dehydrogenase [ubiquinone] 1 beta subcomplex subunit 9 (CIB22), found in Arabidopsis thaliana (Mouse-ear cress).